Here is a 774-residue protein sequence, read N- to C-terminus: FT-interacting protein 7 (774 aa).

A compositionally biased stretch (basic and acidic residues) spans 1 to 17; it reads MMQRPFRPEEYSLKETS. The interval 1 to 25 is disordered; that stretch reads MMQRPFRPEEYSLKETSPHLGGGAA. C2 domains are found at residues 23 to 143, 182 to 305, and 346 to 472; these read GAAG…PQWY, IPGD…SQWY, and YSSD…THAY. Ca(2+)-binding residues include Asp-56, Asp-62, Asp-109, Asp-111, and Asp-116. The next 3 membrane-spanning stretches (helical) occupy residues 575-595, 606-626, and 714-734; these read IMGV…ICHW, ILFV…FLYL, and ATAL…VTPF.

It belongs to the MCTP family. As to quaternary structure, interacts with OSH1. The cofactor is Ca(2+). As to expression, expressed in roots, stems, lemma, palea, pistils and ovules. Expressed at low levels in leaves.

The protein localises to the cell membrane. Promotes nuclear translocation of the transcription factor OSH1, which directly suppresses the auxin biosynthetic gene YUCCA4 during the late development of anthers. Reduction of auxin levels at late stage of anther development, after meiosis of microspore mother cells, is necessary for normal anther dehiscence and seed setting. Required for jasmonate (JA) biosynthetic genes expression and JA production in anthers. The sequence is that of FT-interacting protein 7 from Oryza sativa subsp. japonica (Rice).